A 384-amino-acid polypeptide reads, in one-letter code: WD repeat-containing protein 74 (384 aa).

6 WD repeats span residues 40–80 (RREE…FLSQ), 83–122 (CPGG…ASSD), 128–168 (KVGP…EPVF), 179–220 (DLRV…RRPV), 224–266 (TYGE…GCLK), and 267–306 (GLAG…GLEH). Ser214 is modified (phosphoserine). Lys311 is modified (N6-methyllysine). The interval 320 to 384 (SGRDNWEDEP…KKKRPGSTSP (65 aa)) is required for nucleolar and nuclear location. Residues 323–384 (DNWEDEPQEP…KKKRPGSTSP (62 aa)) form a disordered region. Residues 371–384 (QRRKKKKRPGSTSP) show a composition bias toward basic residues.

Isoform 1 interacts (through WDR repeats) with NVL; the interaction is independent of RNA or pre-60S ribosome particles. Isoform 2 does not interact with NVL. Interacts with MTREX; the interaction dissociation in a late stage of rRNA synthesis is required for appropriate maturation of pre-60S particles and depends on the ATPase activity of NVL.

The protein localises to the nucleus. Its subcellular location is the nucleolus. Its function is as follows. Regulatory protein of the MTREX-exosome complex involved in the synthesis of the 60S ribosomal subunit. Participates in an early cleavage of the pre-rRNA processing pathway in cooperation with NVL. Required for blastocyst formation, is necessary for RNA transcription, processing and/or stability during preimplantation development. The chain is WD repeat-containing protein 74 (Wdr74) from Mus musculus (Mouse).